The chain runs to 154 residues: MARSTARRRALNTLYEADEKGQDFLSLLDERIAQPGAQTPLPEYAIEIVRGVDEHRRDIDSQLNTHSTGWKVKRMHAIDRNILRIATWEILYNDDVPDKVAIDEALNLSKTLSDDAAPSFIHGVLSAIVAAKDKQSPQSTPLDDSDKDESDQTN.

Residues 132 to 154 (KDKQSPQSTPLDDSDKDESDQTN) form a disordered region. The segment covering 143–154 (DDSDKDESDQTN) has biased composition (acidic residues).

Belongs to the NusB family.

Functionally, involved in transcription antitermination. Required for transcription of ribosomal RNA (rRNA) genes. Binds specifically to the boxA antiterminator sequence of the ribosomal RNA (rrn) operons. The polypeptide is Transcription antitermination protein NusB (Bifidobacterium animalis subsp. lactis (strain AD011)).